A 117-amino-acid polypeptide reads, in one-letter code: MANPQRAGRLAQEVQRDVTDLLLKRINDPRVQDVTVTSVELSGDLQIATIYYSILSDLASDGQKAQAGLEAASGLIRKELGARLTVYKTPELKFVRDQSVQYGNHIEDLIRKLHADN.

This sequence belongs to the RbfA family. Monomer. Binds 30S ribosomal subunits, but not 50S ribosomal subunits or 70S ribosomes.

It localises to the cytoplasm. Its function is as follows. One of several proteins that assist in the late maturation steps of the functional core of the 30S ribosomal subunit. Associates with free 30S ribosomal subunits (but not with 30S subunits that are part of 70S ribosomes or polysomes). Required for efficient processing of 16S rRNA. May interact with the 5'-terminal helix region of 16S rRNA. The chain is Ribosome-binding factor A from Leuconostoc citreum (strain KM20).